The following is a 526-amino-acid chain: Peptide chain release factor 3 (526 aa).

A tr-type G domain is found at 8 to 277 (NKRRTFAIIS…GLTEWAPKPQ (270 aa)). GTP contacts are provided by residues 17–24 (SHPDAGKT), 85–89 (DTPGH), and 139–142 (NKLD).

Belongs to the TRAFAC class translation factor GTPase superfamily. Classic translation factor GTPase family. PrfC subfamily.

Its subcellular location is the cytoplasm. Functionally, increases the formation of ribosomal termination complexes and stimulates activities of RF-1 and RF-2. It binds guanine nucleotides and has strong preference for UGA stop codons. It may interact directly with the ribosome. The stimulation of RF-1 and RF-2 is significantly reduced by GTP and GDP, but not by GMP. This chain is Peptide chain release factor 3, found in Haemophilus ducreyi (strain 35000HP / ATCC 700724).